Reading from the N-terminus, the 325-residue chain is GTP 3',8-cyclase (325 aa).

Residues 10–229 form the Radical SAM core domain; sequence GYGRRINYLR…PSLEKIKSED (220 aa). Arg-19 lines the GTP pocket. [4Fe-4S] cluster contacts are provided by Cys-26 and Cys-30. Residue Tyr-32 participates in S-adenosyl-L-methionine binding. Residue Cys-33 coordinates [4Fe-4S] cluster. A GTP-binding site is contributed by Arg-69. Gly-73 is an S-adenosyl-L-methionine binding site. Residue Thr-100 coordinates GTP. Ser-124 contacts S-adenosyl-L-methionine. Residue Lys-161 coordinates GTP. Met-195 provides a ligand contact to S-adenosyl-L-methionine. The [4Fe-4S] cluster site is built by Cys-257 and Cys-260. 262–264 is a binding site for GTP; the sequence is RLR. Cys-274 contacts [4Fe-4S] cluster.

Belongs to the radical SAM superfamily. MoaA family. In terms of assembly, monomer and homodimer. [4Fe-4S] cluster is required as a cofactor.

The enzyme catalyses GTP + AH2 + S-adenosyl-L-methionine = (8S)-3',8-cyclo-7,8-dihydroguanosine 5'-triphosphate + 5'-deoxyadenosine + L-methionine + A + H(+). The protein operates within cofactor biosynthesis; molybdopterin biosynthesis. Catalyzes the cyclization of GTP to (8S)-3',8-cyclo-7,8-dihydroguanosine 5'-triphosphate. This chain is GTP 3',8-cyclase, found in Peptoclostridium acidaminophilum (Eubacterium acidaminophilum).